We begin with the raw amino-acid sequence, 248 residues long: Ubiquinone/menaquinone biosynthesis C-methyltransferase UbiE (248 aa).

Serine 68 and aspartate 92 together coordinate S-adenosyl-L-methionine.

It belongs to the class I-like SAM-binding methyltransferase superfamily. MenG/UbiE family.

It catalyses the reaction a 2-demethylmenaquinol + S-adenosyl-L-methionine = a menaquinol + S-adenosyl-L-homocysteine + H(+). The enzyme catalyses a 2-methoxy-6-(all-trans-polyprenyl)benzene-1,4-diol + S-adenosyl-L-methionine = a 5-methoxy-2-methyl-3-(all-trans-polyprenyl)benzene-1,4-diol + S-adenosyl-L-homocysteine + H(+). It participates in quinol/quinone metabolism; menaquinone biosynthesis; menaquinol from 1,4-dihydroxy-2-naphthoate: step 2/2. The protein operates within cofactor biosynthesis; ubiquinone biosynthesis. Its function is as follows. Methyltransferase required for the conversion of demethylmenaquinol (DMKH2) to menaquinol (MKH2) and the conversion of 2-polyprenyl-6-methoxy-1,4-benzoquinol (DDMQH2) to 2-polyprenyl-3-methyl-6-methoxy-1,4-benzoquinol (DMQH2). The sequence is that of Ubiquinone/menaquinone biosynthesis C-methyltransferase UbiE from Rickettsia bellii (strain OSU 85-389).